The primary structure comprises 201 residues: Orotate phosphoribosyltransferase (201 aa).

Residues Lys90 and 113-121 each bind 5-phospho-alpha-D-ribose 1-diphosphate; that span reads EDIITTGGS. 2 residues coordinate orotate: Thr117 and Arg145.

Belongs to the purine/pyrimidine phosphoribosyltransferase family. PyrE subfamily. In terms of assembly, homodimer. The cofactor is Mg(2+).

The catalysed reaction is orotidine 5'-phosphate + diphosphate = orotate + 5-phospho-alpha-D-ribose 1-diphosphate. Its pathway is pyrimidine metabolism; UMP biosynthesis via de novo pathway; UMP from orotate: step 1/2. Catalyzes the transfer of a ribosyl phosphate group from 5-phosphoribose 1-diphosphate to orotate, leading to the formation of orotidine monophosphate (OMP). This is Orotate phosphoribosyltransferase from Sulfurovum sp. (strain NBC37-1).